Reading from the N-terminus, the 171-residue chain is S-ribosylhomocysteine lyase (171 aa).

The Fe cation site is built by histidine 54, histidine 58, and cysteine 128.

It belongs to the LuxS family. In terms of assembly, homodimer. Fe cation is required as a cofactor.

It catalyses the reaction S-(5-deoxy-D-ribos-5-yl)-L-homocysteine = (S)-4,5-dihydroxypentane-2,3-dione + L-homocysteine. In terms of biological role, involved in the synthesis of autoinducer 2 (AI-2) which is secreted by bacteria and is used to communicate both the cell density and the metabolic potential of the environment. The regulation of gene expression in response to changes in cell density is called quorum sensing. Catalyzes the transformation of S-ribosylhomocysteine (RHC) to homocysteine (HC) and 4,5-dihydroxy-2,3-pentadione (DPD). This Pectobacterium atrosepticum (strain SCRI 1043 / ATCC BAA-672) (Erwinia carotovora subsp. atroseptica) protein is S-ribosylhomocysteine lyase.